A 500-amino-acid chain; its full sequence is Zinc finger protein ENHYDROUS (500 aa).

The segment at 1–42 (MPVDLDNSSTVSGDASVSSTGNQNLTPKSVGKKKRNLPGMPD) is disordered. Positions 8-21 (SSTVSGDASVSSTG) are enriched in low complexity. Serine 51 is subject to Phosphoserine. 2 C2H2-type zinc fingers span residues 61-83 (FVCE…RRGH) and 102-132 (YVCP…CRKH). The short motif at 124-131 (IKKHFCRK) is the Nuclear localization signal element. Residues 137-160 (WKCEKCSKKYAVQSDWKAHSKICG) form a C2H2-type 2; degenerate zinc finger. Zn(2+) contacts are provided by cysteine 139, cysteine 142, histidine 155, cysteine 159, cysteine 166, cysteine 168, histidine 181, and cysteine 185. The CCHC-type 2; atypical zinc finger occupies 164–187 (YKCDCGTLFSRRDSFITHRAFCDA). The tract at residues 174–186 (RRDSFITHRAFCD) is SHR-binding. A disordered region spans residues 196-236 (HTQSKKLYPETVTRKNPEIEQKSPAAVESSPSLPPSSPPSV). The segment covering 207-216 (VTRKNPEIEQ) has biased composition (basic and acidic residues).

In terms of assembly, interacts with the DELLA proteins (e.g. GAI/RGA2, RGA, RGL1, RGL2 and RGLG3), acting as coactivators. As to expression, at 3 days post anthesis (DPA), expressed in the chalazal endosperm region. By 6 DPA, expressed in the endosperm and embryo. In fully germinated seed, strongest expression in the root tip and not detected in the cotyledons. In 4-days old seedlings, restricted to the vasculature of the cotyledons, the shoot apical meristem region, and the root tip. By 8 days, restricted to newly emerged leaves.

The protein resides in the nucleus. In terms of biological role, transcription factor promoting the transition to germination by regulating light and hormonal signaling during seed maturation. Acts as a positive regulator of phytochrome and/or gibberellin action. This chain is Zinc finger protein ENHYDROUS, found in Arabidopsis thaliana (Mouse-ear cress).